Reading from the N-terminus, the 256-residue chain is Trypsin alpha (256 aa).

The first 22 residues, 1–22 (MLKIVILLSAVVCALGGTVPEG), serve as a signal peptide directing secretion. Positions 23-30 (LLPQLDGR) are cleaved as a propeptide — activation peptide. A Peptidase S1 domain is found at 31–254 (IVGGSATTIS…LRSWVISTAN (224 aa)). Residues Cys-56 and Cys-72 are joined by a disulfide bond. Catalysis depends on charge relay system residues His-71 and Asp-116. Cystine bridges form between Cys-180–Cys-197 and Cys-206–Cys-230. The active-site Charge relay system is the Ser-210.

The protein belongs to the peptidase S1 family.

Its subcellular location is the secreted. The protein localises to the extracellular space. The catalysed reaction is Preferential cleavage: Arg-|-Xaa, Lys-|-Xaa.. This chain is Trypsin alpha (alphaTry), found in Drosophila erecta (Fruit fly).